A 64-amino-acid chain; its full sequence is Small hydrophobic protein (64 aa).

Topologically, residues 1–20 (MENTSITIEFSSKFWPYFTL) are intravirion. Residues 6 to 15 (ITIEFSSKFW) are interaction with host BCAP31. Residues 21–44 (IHMITTIISLLIIISIMIAILNKL) form a helical; Signal-anchor for type II membrane protein membrane-spanning segment. An interaction with small-molecule inhibitor region spans residues 38-43 (IAILNK). At 45–64 (CEYNVFHNKTFELPRARVNT) the chain is on the virion surface side. A glycan (N-linked (GlcNAc...) asparagine; by host) is linked at N52.

It belongs to the orthopneumovirus small hydrophobic protein family. As to quaternary structure, homopentamer forming a funnel-like pore. Interacts with glycoprotein G; this interaction occurs on the surface of virion particles and infected cells. Interacts with host BCAP31 (via C-terminus); this interaction is direct. Four species of SH have been detected in infected cell cytoplasm: a 7.5 kDa non-glycosylated form (SH0), a 13-15 kDa form that contains one or two N-linked carbohydrate side chains of the high-mannose type (SHg), a 21-30 kDa polylactosaminoglycan-modified form of the protein (SHp), and the isoform generated by alternative translational initiation. Of these different forms, SH0 is by far the most abundant protein detected during virus infection. Post-translationally, tyrosine phosphorylated.

The protein localises to the virion membrane. It is found in the host cell membrane. It localises to the host Golgi apparatus membrane. The protein resides in the host endoplasmic reticulum membrane. Its activity is regulated as follows. Channel activity is inhibited by copper. Also inhibited by small-molecule pyronin B. Functionally, viroporin that forms a homopentameric ion channel displaying low ion selectivity. May play a role in virus morphogenesis and pathogenicity at various stages of the viral life cycle. Accumulates at the membrane of the Golgi apparatus in infected cells and may facilitate virus release by modifying the secretory pathway. May enhance host membrane permeability and disrupt cellular ion homeostasis, which can be sensed as damage-associated molecular patterns/danger signals, triggering NLRP3 inflammasome activation and inflammatory immune response. Also inhibits host TNFA-mediated signaling pathway and may delay apoptosis, allowing time for the virus to replicate. The sequence is that of Small hydrophobic protein from Homo sapiens (Human).